The primary structure comprises 524 residues: Putative cysteine ligase BshC (524 aa).

Residues 437 to 457 (AQALDRSARKINYQIEKMERK) are a coiled coil.

The protein belongs to the BshC family.

The polypeptide is Putative cysteine ligase BshC (Solibacter usitatus (strain Ellin6076)).